A 396-amino-acid polypeptide reads, in one-letter code: L-lactate dehydrogenase (396 aa).

In terms of domain architecture, FMN hydroxy acid dehydrogenase spans methionine 1 to glycine 380. Tyrosine 24 contacts substrate. Positions 106 and 127 each coordinate FMN. Residue tyrosine 129 coordinates substrate. Residue threonine 155 participates in FMN binding. Arginine 164 provides a ligand contact to substrate. Residue lysine 251 participates in FMN binding. Histidine 275 serves as the catalytic Proton acceptor. Arginine 278 is a substrate binding site. Aspartate 306–arginine 330 contributes to the FMN binding site.

It belongs to the FMN-dependent alpha-hydroxy acid dehydrogenase family. FMN serves as cofactor.

The protein resides in the cell inner membrane. It catalyses the reaction (S)-lactate + A = pyruvate + AH2. In terms of biological role, catalyzes the conversion of L-lactate to pyruvate. Is coupled to the respiratory chain. The sequence is that of L-lactate dehydrogenase from Shigella dysenteriae serotype 1 (strain Sd197).